The primary structure comprises 110 residues: Secreted Ly-6/uPAR-related protein 1 (110 aa).

Positions 1 to 22 (MTLRWAMWLLLLAAWSMGYGEA) are cleaved as a signal peptide. The region spanning 24–73 (RCYTCEQPTAINSCKNIAQCKMEDTACKTVLETVEAAFPFNHSPMVTRSC) is the UPAR/Ly6 domain. Intrachain disulfides connect Cys25-Cys50, Cys28-Cys37, Cys43-Cys73, Cys77-Cys93, and Cys94-Cys99.

As to quaternary structure, homodimer. Interacts with PLAU. Interacts with CHRNA7. Expressed in skin, eye, whole lung, trachea, esophagus and stomach. Widely expressed in various tissues including spleen and thymus but not pancreas. Expressed in macrophages, dendritic cells, T and B cells. Expressed in lung specifically in ciliated bronchial epithelial cells (at protein level). Expression is decreased in lungs of asthmatic model mice. Expressed in the cornea.

It localises to the secreted. Functionally, has an antitumor activity. Was found to be a marker of late differentiation of the skin. Implicated in maintaining the physiological and structural integrity of the keratinocyte layers of the skin. In vitro down-regulates keratinocyte proliferation; the function may involve the proposed role as modulator of nicotinic acetylcholine receptors (nAChRs) activity. In vitro inhibits alpha-7-dependent nAChR currents in an allosteric manner. In T cells may be involved in regulation of intracellular Ca(2+) signaling. Seems to have a immunomodulatory function in the cornea. The function may implicate a possible role as a scavenger receptor for PLAU thereby blocking PLAU-dependent functions of PLAUR such as in cell migration and proliferation. The sequence is that of Secreted Ly-6/uPAR-related protein 1 (Slurp1) from Mus musculus (Mouse).